The following is a 944-amino-acid chain: Leucine--tRNA ligase 2 (944 aa).

The 'HIGH' region signature appears at 36-46 (PYPNSPWHIGH). Positions 623 to 627 (KMSKS) match the 'KMSKS' region motif. Residue lysine 626 participates in ATP binding.

It belongs to the class-I aminoacyl-tRNA synthetase family.

It localises to the cytoplasm. The enzyme catalyses tRNA(Leu) + L-leucine + ATP = L-leucyl-tRNA(Leu) + AMP + diphosphate. This chain is Leucine--tRNA ligase 2, found in Saccharolobus solfataricus (strain ATCC 35092 / DSM 1617 / JCM 11322 / P2) (Sulfolobus solfataricus).